The chain runs to 207 residues: MLYVVDHPLIKHKLTIMRKKETGPKEFRELLREITLLITYEATRHIPVYELEVETPLEKTKGYYINDKDIVVIPILRAGLGMVDGILELLPNASVGHIGIYRDPETLKAVDYYFKTPKLHDKSEIFILDPMLATGVSAIDAITKVKELGGKQITFISLISSPEGVKAIEKAHPDVNIYTASLDRELNDHGYILPGLGDAGDRLFRTK.

Residues arginine 77, arginine 102, and aspartate 129 to serine 137 each bind 5-phospho-alpha-D-ribose 1-diphosphate. Uracil contacts are provided by residues isoleucine 192 and glycine 197–alanine 199. Aspartate 198 contacts 5-phospho-alpha-D-ribose 1-diphosphate.

It belongs to the UPRTase family. Requires Mg(2+) as cofactor.

It carries out the reaction UMP + diphosphate = 5-phospho-alpha-D-ribose 1-diphosphate + uracil. The protein operates within pyrimidine metabolism; UMP biosynthesis via salvage pathway; UMP from uracil: step 1/1. Allosterically activated by GTP. Catalyzes the conversion of uracil and 5-phospho-alpha-D-ribose 1-diphosphate (PRPP) to UMP and diphosphate. This is Uracil phosphoribosyltransferase from Fervidobacterium nodosum (strain ATCC 35602 / DSM 5306 / Rt17-B1).